Reading from the N-terminus, the 627-residue chain is uncharacterized protein (627 aa).

At 1-32 (MVDDSNYLTPHETALAVVATAMKKARLQLDTL) the chain is on the extracellular side. A helical transmembrane segment spans residues 33 to 53 (LINSILGGVLFSSGSFLLVAV). Topologically, residues 54 to 66 (YSEDPDIVARNPG) are cytoplasmic. The chain crosses the membrane as a helical span at residues 67–87 (IVNLITGVNFAMGLFYVVMMG). The Extracellular segment spans residues 88 to 113 (ADLFNSNILFFSVGVLRKAVTIYDLM). Residues 114–134 (ISWVVSWLGNIAGSLFVSYLF) traverse the membrane as a helical segment. Over 135–165 (GHLSGISSQKLWIIGSRQIIEQKVSYSFVQT) the chain is Cytoplasmic. Residues 166–186 (FLKGIACNFFVCLAIYLQLMA) form a helical membrane-spanning segment. At 187–192 (KPIHVK) the chain is on the extracellular side. A helical membrane pass occupies residues 193 to 213 (FILMSFPIIDFIGIGFTHVVG). At 214–218 (DMSAS) the chain is on the cytoplasmic side. The chain crosses the membrane as a helical span at residues 219–239 (FIAMLNGANVSVGKYIWKLLI). The Extracellular segment spans residues 240-245 (PASLGN). The chain crosses the membrane as a helical span at residues 246-266 (IVGGLFFSAVVPFYLHLVVVE). Residues 267–627 (RDRKRLSLPE…FYNRHTSPQL (361 aa)) are Cytoplasmic-facing. Threonine 305 carries the phosphothreonine modification. Residues 512 to 537 (PPILPRTTQDTFPHNAPASSPAYTDD) form a disordered region. The span at 517 to 533 (RTTQDTFPHNAPASSPA) shows a compositional bias: polar residues. Residue serine 546 is modified to Phosphoserine. At threonine 588 the chain carries Phosphothreonine. Basic and acidic residues predominate over residues 605–614 (STTRRQKITE). Residues 605–627 (STTRRQKITEPKNFYNRHTSPQL) form a disordered region.

It belongs to the FNT transporter (TC 1.A.16) family.

The protein localises to the membrane. This is an uncharacterized protein from Saccharomyces cerevisiae (strain ATCC 204508 / S288c) (Baker's yeast).